The chain runs to 471 residues: Abscission/NoCut checkpoint regulator (471 aa).

Residues 39–64 (GGAGQGREGRSWGEGPRGPGLGRRDL) are disordered. The FYVE-type zinc finger occupies 74–133 (ATMESRCYGCAVKFTLFKKEYGCKNCGRAFCSGCLSFSAAVPRTGNTQQKVCKQCHEVLT). 8 residues coordinate Zn(2+): C80, C83, C96, C99, C104, C107, C125, and C128. S144 bears the Phosphoserine mark. Residues 174-187 (DQMIAERLARLRQE) carry the MIM1-A motif. K207 is covalently cross-linked (Glycyl lysine isopeptide (Lys-Gly) (interchain with G-Cter in SUMO2)). A Phosphothreonine modification is found at T243. The disordered stretch occupies residues 271 to 299 (KGGGPAASLQNDLNQGGPGSTNSKRQANW). Polar residues predominate over residues 278-299 (SLQNDLNQGGPGSTNSKRQANW). A phosphoserine mark is found at G286 and S293. The stretch at 311 to 375 (EAALELREEN…RVLQQLTEEA (65 aa)) forms a coiled coil. The MIM1-B signature appears at 326–339 (ILALAKRLAMLRGQ). S354 carries the post-translational modification Phosphoserine. Residues 386–412 (PAEQASRPWTQPRGAEPEAQDVDPRPE) form a disordered region. S463 bears the Phosphoserine mark.

In terms of assembly, interacts (via MIM1-B) with VPS4A; interaction takes place at the midbody ring following cytokinesis checkpoint activation. Phosphorylated in vitro at Ser-22 by AURKB; however, phosphorylation at this site could not be confirmed in vivo. Detected in brain, heart, skeletal muscle and kidney. Expressed in the liver (at protein level).

The protein localises to the cytoplasm. The protein resides in the cytoskeleton. It localises to the microtubule organizing center. It is found in the centrosome. Its subcellular location is the cleavage furrow. The protein localises to the midbody. The protein resides in the midbody ring. Its function is as follows. Key regulator of abscission step in cytokinesis: part of the cytokinesis checkpoint, a process required to delay abscission to prevent both premature resolution of intercellular chromosome bridges and accumulation of DNA damage. Together with CHMP4C, required to retain abscission-competent VPS4 (VPS4A and/or VPS4B) at the midbody ring until abscission checkpoint signaling is terminated at late cytokinesis. Deactivation of AURKB results in dephosphorylation of CHMP4C followed by its dissociation from ZFYVE19/ANCHR and VPS4 and subsequent abscission. The polypeptide is Abscission/NoCut checkpoint regulator (ZFYVE19) (Homo sapiens (Human)).